Here is a 195-residue protein sequence, read N- to C-terminus: MVNGRIPSVFSKTYVTPRRPYEKARLDQELKIIGEYGLRNKREVWRVKYALAKIRKAARELLTLDEKDEKRLFQGNALLRRLVRIGVLDESRMKLDYVLGLKIEDFLERRLQTQVFKLGLAKSIHHARVLIRQRHIRVRKQVVNIPSFVVRLDSQKHIDFSLKSPFGGGRPGRVKRKNLKKNQGGGGGAAEEEED.

The 75-residue stretch at 109 to 183 folds into the S4 RNA-binding domain; sequence RRLQTQVFKL…VKRKNLKKNQ (75 aa). A disordered region spans residues 165 to 195; sequence PFGGGRPGRVKRKNLKKNQGGGGGAAEEEED.

The protein belongs to the universal ribosomal protein uS4 family. Component of the small ribosomal subunit. Identified in a IGF2BP1-dependent mRNP granule complex containing untranslated mRNAs. Part of the small subunit (SSU) processome, composed of more than 70 proteins and the RNA chaperone small nucleolar RNA (snoRNA) U3.

It localises to the cytoplasm. The protein localises to the nucleus. The protein resides in the nucleolus. In terms of biological role, component of the small ribosomal subunit. The ribosome is a large ribonucleoprotein complex responsible for the synthesis of proteins in the cell. Part of the small subunit (SSU) processome, first precursor of the small eukaryotic ribosomal subunit. During the assembly of the SSU processome in the nucleolus, many ribosome biogenesis factors, an RNA chaperone and ribosomal proteins associate with the nascent pre-rRNA and work in concert to generate RNA folding, modifications, rearrangements and cleavage as well as targeted degradation of pre-ribosomal RNA by the RNA exosome. The chain is Small ribosomal subunit protein uS4 from Drosophila melanogaster (Fruit fly).